The chain runs to 661 residues: uncharacterized protein (661 aa).

An N-terminal signal peptide occupies residues 1–24 (MKTLKTLKIFIIVFIASVSLASFA). Transmembrane regions (helical) follow at residues 226-246 (IIGAALILYTMFFAFNMALNT), 254-274 (IALFVIKFLFVAYFSIGLGPL), 410-430 (IILAAGLVFSVIFLSILLYFI), 436-456 (CMITIYVMTYISPIFIPMALF), 469-489 (VCISCALQPAVVAGFIALLIT), and 562-582 (VVSILAELLCVLVFSVIFYYF). Residues 629–661 (GKPLVGDKPGVGGKRKEGEQQGGDLASGSGGGK) form a disordered region.

Belongs to the TrbL/VirB6 family.

Its subcellular location is the cell membrane. This is an uncharacterized protein from Rickettsia conorii (strain ATCC VR-613 / Malish 7).